The primary structure comprises 368 residues: Carbamoyl phosphate synthase small chain (368 aa).

The CPSase stretch occupies residues 1-178 (MKAVLGLEDG…GAAGAWKGSG (178 aa)). 3 residues coordinate L-glutamine: serine 45, glycine 230, and glycine 232. Residues 182-368 (HAVVVDLGIK…KVVKVLGGGL (187 aa)) form the Glutamine amidotransferase type-1 domain. Catalysis depends on cysteine 257, which acts as the Nucleophile. Positions 258, 261, 299, 301, and 302 each coordinate L-glutamine. Catalysis depends on residues histidine 342 and glutamate 344.

This sequence belongs to the CarA family. In terms of assembly, composed of two chains; the small (or glutamine) chain promotes the hydrolysis of glutamine to ammonia, which is used by the large (or ammonia) chain to synthesize carbamoyl phosphate. Tetramer of heterodimers (alpha,beta)4.

The enzyme catalyses hydrogencarbonate + L-glutamine + 2 ATP + H2O = carbamoyl phosphate + L-glutamate + 2 ADP + phosphate + 2 H(+). It carries out the reaction L-glutamine + H2O = L-glutamate + NH4(+). The protein operates within amino-acid biosynthesis; L-arginine biosynthesis; carbamoyl phosphate from bicarbonate: step 1/1. It functions in the pathway pyrimidine metabolism; UMP biosynthesis via de novo pathway; (S)-dihydroorotate from bicarbonate: step 1/3. Functionally, small subunit of the glutamine-dependent carbamoyl phosphate synthetase (CPSase). CPSase catalyzes the formation of carbamoyl phosphate from the ammonia moiety of glutamine, carbonate, and phosphate donated by ATP, constituting the first step of 2 biosynthetic pathways, one leading to arginine and/or urea and the other to pyrimidine nucleotides. The small subunit (glutamine amidotransferase) binds and cleaves glutamine to supply the large subunit with the substrate ammonia. This chain is Carbamoyl phosphate synthase small chain, found in Methanosarcina mazei (strain ATCC BAA-159 / DSM 3647 / Goe1 / Go1 / JCM 11833 / OCM 88) (Methanosarcina frisia).